The sequence spans 604 residues: MDVRRRSEEAVYSSKVFAADEKPLKPHKQQQEEDNTLLIDASDALPLPLYFTNGLFFTMFFSVMYFLLSRWREKIRNSTPLHVVTLSELGAIVSLIASVIYLLGFFGIGFVQTFVARGNNDSWDEEDENDEQFILEEDSRRGPCAAATTLGCAVPTPPAKHIAPIVPQQPAVSIAEKPAPLVTPAASEEDEEIIKSVVQGKIPSYSLESKLGDCKRAASIRKEVLQRITGKSLEGLPLDGFNYESILGQCCEMTIGYVQIPVGIAGPLLLNGREYSVPMATTEGCLVASTNRGCKAIYASGGATSILLRDGMTRAPCVRFGTAKRAAELKFFVEDPINFETLANVFNQSSRFARLQRIQCAIAGKNLHMRFVCSTGDAMGMNMVSKGVQNVLDYLQNEYADMDVIGISANFCSDKKPAAVNWIEGRGKSVVCEAIITEEVVKKVLKTEVAALVELNMLKNLTGSALAGALGGFNAHASNIVSAVYIATGQDPAQNIESSHCITMMEAVNDGKDLHISVTMPSIEVGTVGGGTQLASQSACLNLLGVKGANREAPGSNARLLATIVAGSVLAGELSLMSAISAGQLVNSHMKYNRSTKDVTKASS.

The next 2 helical transmembrane spans lie at Leu47 to Leu67 and Ala91 to Val111. Residues Gln112–Glu188 form a linker region. The N-linked (GlcNAc...) asparagine glycan is linked to Asn120. A catalytic region spans residues Glu189–Ser604. Catalysis depends on Glu283, which acts as the Charge relay system. Asn347 carries an N-linked (GlcNAc...) asparagine glycan. The active-site Charge relay system is Lys415. N-linked (GlcNAc...) asparagine glycosylation is present at Asn460. The active-site Charge relay system is the Asp491. The active-site Proton donor is the His589. Asn593 is a glycosylation site (N-linked (GlcNAc...) asparagine).

The protein belongs to the HMG-CoA reductase family.

It localises to the endoplasmic reticulum membrane. The catalysed reaction is (R)-mevalonate + 2 NADP(+) + CoA = (3S)-3-hydroxy-3-methylglutaryl-CoA + 2 NADPH + 2 H(+). Its pathway is metabolic intermediate biosynthesis; (R)-mevalonate biosynthesis; (R)-mevalonate from acetyl-CoA: step 3/3. Functionally, catalyzes the synthesis of mevalonate. The specific precursor of all isoprenoid compounds present in plants. The sequence is that of 3-hydroxy-3-methylglutaryl-coenzyme A reductase 2 (HMGR2) from Capsicum annuum (Capsicum pepper).